Reading from the N-terminus, the 145-residue chain is D-aminoacyl-tRNA deacylase (145 aa).

Residues Gly137–Pro138 carry the Gly-cisPro motif, important for rejection of L-amino acids motif.

This sequence belongs to the DTD family. Homodimer.

It localises to the cytoplasm. The enzyme catalyses glycyl-tRNA(Ala) + H2O = tRNA(Ala) + glycine + H(+). It catalyses the reaction a D-aminoacyl-tRNA + H2O = a tRNA + a D-alpha-amino acid + H(+). An aminoacyl-tRNA editing enzyme that deacylates mischarged D-aminoacyl-tRNAs. Also deacylates mischarged glycyl-tRNA(Ala), protecting cells against glycine mischarging by AlaRS. Acts via tRNA-based rather than protein-based catalysis; rejects L-amino acids rather than detecting D-amino acids in the active site. By recycling D-aminoacyl-tRNA to D-amino acids and free tRNA molecules, this enzyme counteracts the toxicity associated with the formation of D-aminoacyl-tRNA entities in vivo and helps enforce protein L-homochirality. In Shewanella piezotolerans (strain WP3 / JCM 13877), this protein is D-aminoacyl-tRNA deacylase.